The sequence spans 103 residues: Large ribosomal subunit protein bL21 (103 aa).

This sequence belongs to the bacterial ribosomal protein bL21 family. As to quaternary structure, part of the 50S ribosomal subunit. Contacts protein L20.

This protein binds to 23S rRNA in the presence of protein L20. This chain is Large ribosomal subunit protein bL21, found in Pectobacterium atrosepticum (strain SCRI 1043 / ATCC BAA-672) (Erwinia carotovora subsp. atroseptica).